Consider the following 245-residue polypeptide: Probable phosphatase Spro_1934 (245 aa).

H7, H9, H15, H40, E73, H101, H131, D192, and H194 together coordinate Zn(2+).

It belongs to the PHP family. As to quaternary structure, homotrimer. It depends on Zn(2+) as a cofactor.

The sequence is that of Probable phosphatase Spro_1934 from Serratia proteamaculans (strain 568).